Consider the following 343-residue polypeptide: Methionine import ATP-binding protein MetN (343 aa).

Positions 2–241 (IKLSNITKVF…PKTPLAQKFI (240 aa)) constitute an ABC transporter domain. 38-45 (GASGAGKS) contacts ATP.

It belongs to the ABC transporter superfamily. Methionine importer (TC 3.A.1.24) family. As to quaternary structure, the complex is composed of two ATP-binding proteins (MetN), two transmembrane proteins (MetI) and a solute-binding protein (MetQ).

The protein localises to the cell inner membrane. The catalysed reaction is L-methionine(out) + ATP + H2O = L-methionine(in) + ADP + phosphate + H(+). The enzyme catalyses D-methionine(out) + ATP + H2O = D-methionine(in) + ADP + phosphate + H(+). Its function is as follows. Part of the ABC transporter complex MetNIQ involved in methionine import. Responsible for energy coupling to the transport system. This is Methionine import ATP-binding protein MetN from Escherichia coli O157:H7.